The primary structure comprises 371 residues: Ribosomal RNA small subunit methyltransferase H (371 aa).

S-adenosyl-L-methionine contacts are provided by residues 92 to 94 (GGH), aspartate 111, tyrosine 138, aspartate 159, and glutamine 166.

It belongs to the methyltransferase superfamily. RsmH family.

It is found in the cytoplasm. It catalyses the reaction cytidine(1402) in 16S rRNA + S-adenosyl-L-methionine = N(4)-methylcytidine(1402) in 16S rRNA + S-adenosyl-L-homocysteine + H(+). In terms of biological role, specifically methylates the N4 position of cytidine in position 1402 (C1402) of 16S rRNA. This Mycolicibacterium gilvum (strain PYR-GCK) (Mycobacterium gilvum (strain PYR-GCK)) protein is Ribosomal RNA small subunit methyltransferase H.